A 269-amino-acid polypeptide reads, in one-letter code: C-type lectin domain family 1 member A (269 aa).

Over 1 to 51 (MQAKYSSTRDMLDDDDTTISLYSGTSTVTRRAEPRHSENGTPSSVWRPVAL) the chain is Cytoplasmic. The helical; Signal-anchor for type II membrane protein transmembrane segment at 52–72 (TLLTLCLVLLVGLAALGLVFF) threads the bilayer. Residues 73-269 (QFYQLSNIQQ…AGRVVPGELQ (197 aa)) lie on the Extracellular side of the membrane. N-linked (GlcNAc...) asparagine glycans are attached at residues N94, N126, N168, and N202. Residues 143–257 (YGDKCYQFYK…CKELRRCACE (115 aa)) enclose the C-type lectin domain. Cystine bridges form between C164-C256 and C235-C248.

The protein resides in the membrane. This is C-type lectin domain family 1 member A (Clec1a) from Mus musculus (Mouse).